A 485-amino-acid polypeptide reads, in one-letter code: Pelle-like serine/threonine-protein kinase pik-1 (485 aa).

The span at 115 to 132 (TSRVSKQMVQPPGSQSAS) shows a compositional bias: polar residues. The segment at 115–155 (TSRVSKQMVQPPGSQSASRLKKTEIKESSPSPAAAAASQLS) is disordered. The segment covering 142–152 (SSPSPAAAAAS) has biased composition (low complexity). The Protein kinase domain maps to 185–485 (FAVSNVIGKG…LCKNSIPPVV (301 aa)). Residues 191 to 199 (IGKGGYGTV) and Lys214 contribute to the ATP site. Asp318 (proton acceptor) is an active-site residue.

This sequence belongs to the protein kinase superfamily. TKL Ser/Thr protein kinase family. Pelle subfamily. Interacts with actl-1. As to expression, expressed in the nervous system.

The catalysed reaction is L-seryl-[protein] + ATP = O-phospho-L-seryl-[protein] + ADP + H(+). The enzyme catalyses L-threonyl-[protein] + ATP = O-phospho-L-threonyl-[protein] + ADP + H(+). In terms of biological role, through association with the adapter actl-1, may act downstream of the receptor complex composed of ilcr-1 and ilcr-2, which is a signaling complex that modulates neuronal activity and animal behavior in response to sensory neuron input. In Caenorhabditis elegans, this protein is Pelle-like serine/threonine-protein kinase pik-1.